Here is a 317-residue protein sequence, read N- to C-terminus: DNA-directed RNA polymerase subunit alpha (317 aa).

The tract at residues 1-234 (MKQFVRPEFI…AHLEFFIDLN (234 aa)) is alpha N-terminal domain (alpha-NTD). An alpha C-terminal domain (alpha-CTD) region spans residues 249-317 (DDKELDRTVE…ASLGLAFRQS (69 aa)).

Belongs to the RNA polymerase alpha chain family. In terms of assembly, homodimer. The RNAP catalytic core consists of 2 alpha, 1 beta, 1 beta' and 1 omega subunit. When a sigma factor is associated with the core the holoenzyme is formed, which can initiate transcription.

It carries out the reaction RNA(n) + a ribonucleoside 5'-triphosphate = RNA(n+1) + diphosphate. Functionally, DNA-dependent RNA polymerase catalyzes the transcription of DNA into RNA using the four ribonucleoside triphosphates as substrates. This Mycoplasma capricolum subsp. capricolum (strain California kid / ATCC 27343 / NCTC 10154) protein is DNA-directed RNA polymerase subunit alpha.